The chain runs to 146 residues: MRAVVQRVKSARVKVNGKSVGAINKGLLVLLGVAPEDTSKEVEYLAKKIVGLRIFEDDNGKMNLSLDEVGGEMLVVSQFTLYGDCRKGRRPSFVGAAPPELAEKLYEEFVNVVDLLGIKTETGKFGAMMDVSLVNQGPVTLIVESK.

Positions 137–138 match the Gly-cisPro motif, important for rejection of L-amino acids motif; sequence GP.

The protein belongs to the DTD family. As to quaternary structure, homodimer.

Its subcellular location is the cytoplasm. The enzyme catalyses glycyl-tRNA(Ala) + H2O = tRNA(Ala) + glycine + H(+). It carries out the reaction a D-aminoacyl-tRNA + H2O = a tRNA + a D-alpha-amino acid + H(+). An aminoacyl-tRNA editing enzyme that deacylates mischarged D-aminoacyl-tRNAs. Also deacylates mischarged glycyl-tRNA(Ala), protecting cells against glycine mischarging by AlaRS. Acts via tRNA-based rather than protein-based catalysis; rejects L-amino acids rather than detecting D-amino acids in the active site. By recycling D-aminoacyl-tRNA to D-amino acids and free tRNA molecules, this enzyme counteracts the toxicity associated with the formation of D-aminoacyl-tRNA entities in vivo and helps enforce protein L-homochirality. This Desulfatibacillum aliphaticivorans protein is D-aminoacyl-tRNA deacylase.